Consider the following 330-residue polypeptide: Anthranilate phosphoribosyltransferase (330 aa).

5-phospho-alpha-D-ribose 1-diphosphate contacts are provided by residues Gly79, 82 to 83 (GD), Thr87, 89 to 92 (NIST), 107 to 115 (KHGNYGVSS), and Ser119. Residue Gly79 participates in anthranilate binding. Ser91 contributes to the Mg(2+) binding site. Asn110 is an anthranilate binding site. An anthranilate-binding site is contributed by Arg165. Mg(2+) is bound by residues Asp223 and Glu224.

It belongs to the anthranilate phosphoribosyltransferase family. As to quaternary structure, homodimer. The cofactor is Mg(2+).

It carries out the reaction N-(5-phospho-beta-D-ribosyl)anthranilate + diphosphate = 5-phospho-alpha-D-ribose 1-diphosphate + anthranilate. It participates in amino-acid biosynthesis; L-tryptophan biosynthesis; L-tryptophan from chorismate: step 2/5. In terms of biological role, catalyzes the transfer of the phosphoribosyl group of 5-phosphorylribose-1-pyrophosphate (PRPP) to anthranilate to yield N-(5'-phosphoribosyl)-anthranilate (PRA). In Flavobacterium psychrophilum (strain ATCC 49511 / DSM 21280 / CIP 103535 / JIP02/86), this protein is Anthranilate phosphoribosyltransferase.